Here is a 222-residue protein sequence, read N- to C-terminus: Putative O-methyltransferase MAV_1364 (222 aa).

Residues V49, E71, 73–74, S79, D97, and I98 contribute to the S-adenosyl-L-methionine site; that span reads GT. Substrate is bound at residue D145. D147 serves as a coordination point for S-adenosyl-L-methionine.

Belongs to the class I-like SAM-binding methyltransferase superfamily. Cation-dependent O-methyltransferase family.

In Mycobacterium avium (strain 104), this protein is Putative O-methyltransferase MAV_1364.